The chain runs to 100 residues: Pancreatic polypeptide prohormone (100 aa).

The N-terminal stretch at 1–29 is a signal peptide; sequence MAVAYCCLSLFLVSTWVALLLQPLQGTWG. The residue at position 65 (Y65) is a Tyrosine amide.

This sequence belongs to the NPY family. No icosapeptide-like peptide is cleaved from the C-terminal.

It localises to the secreted. Its function is as follows. Hormone secreted by pancreatic cells that acts as a regulator of pancreatic and gastrointestinal functions probably by signaling through the G protein-coupled receptor NPY4R2. The polypeptide is Pancreatic polypeptide prohormone (Ppy) (Mus musculus (Mouse)).